We begin with the raw amino-acid sequence, 356 residues long: MRMQWIWKSRRSLQNVFIRRSSQYHKPFWRRPLPATLLGCAVLGVAAVYFAKPSPIDENYPRSVAKYLHEALYRQKGENNHDFQDAWKAYQSAIKQAESEKMDMESPPVQGIRLQMANLLASAGALHKAWSMYWDILERTSKLPDFLEQRVLIASKLIELSEPLGLQKDATKAADLIVKALLSKQFNGDDEQKSRLFEQSATLYFQAGTPSYAVPLYHEALNLTMANPSCHGLILMNNLATSLLAQTETVDKKHHETLMKQSQSWSQKAVDSYYFAYPKDRNQECHAGCAAAFYTLGQIAERQGNIDLALKHYKNSEALRKDDPYNDGSMLSHIAIDRLDKDAFIKKLDKSSSPTD.

The transit peptide at 1-20 (MRMQWIWKSRRSLQNVFIRR) directs the protein to the mitochondrion. TPR repeat units lie at residues 194–227 (SRLFEQSATLYFQAGTPSYAVPLYHEALNLTMAN) and 290–323 (AAAFYTLGQIAERQGNIDLALKHYKNSEALRKDD).

It localises to the mitochondrion. This is TPR repeat-containing protein P27G11.02 from Schizosaccharomyces pombe (strain 972 / ATCC 24843) (Fission yeast).